The following is a 417-amino-acid chain: Serine hydroxymethyltransferase (417 aa).

Residues leucine 121 and 125–127 (GHL) each bind (6S)-5,6,7,8-tetrahydrofolate. Lysine 230 carries the post-translational modification N6-(pyridoxal phosphate)lysine. A (6S)-5,6,7,8-tetrahydrofolate-binding site is contributed by 355 to 357 (SPF).

It belongs to the SHMT family. As to quaternary structure, homodimer. The cofactor is pyridoxal 5'-phosphate.

The protein resides in the cytoplasm. The enzyme catalyses (6R)-5,10-methylene-5,6,7,8-tetrahydrofolate + glycine + H2O = (6S)-5,6,7,8-tetrahydrofolate + L-serine. The protein operates within one-carbon metabolism; tetrahydrofolate interconversion. Its pathway is amino-acid biosynthesis; glycine biosynthesis; glycine from L-serine: step 1/1. Functionally, catalyzes the reversible interconversion of serine and glycine with tetrahydrofolate (THF) serving as the one-carbon carrier. This reaction serves as the major source of one-carbon groups required for the biosynthesis of purines, thymidylate, methionine, and other important biomolecules. Also exhibits THF-independent aldolase activity toward beta-hydroxyamino acids, producing glycine and aldehydes, via a retro-aldol mechanism. The protein is Serine hydroxymethyltransferase of Ruthia magnifica subsp. Calyptogena magnifica.